Reading from the N-terminus, the 216-residue chain is Probable GH family 25 lysozyme 5 (216 aa).

An N-terminal signal peptide occupies residues 1–20; the sequence is MRFIISLLFVFTLIFNLAFS. In terms of domain architecture, Ch-type lysozyme spans 21-216; that stretch reads HIGIDVSSGT…GLGIDKNYWE (196 aa). Residue D25 is part of the active site. Residue N31 is glycosylated (N-linked (GlcNAc...) asparagine). Active-site residues include D113 and E115.

This sequence belongs to the glycosyl hydrolase 25 family.

It localises to the secreted. The catalysed reaction is Hydrolysis of (1-&gt;4)-beta-linkages between N-acetylmuramic acid and N-acetyl-D-glucosamine residues in a peptidoglycan and between N-acetyl-D-glucosamine residues in chitodextrins.. The sequence is that of Probable GH family 25 lysozyme 5 from Dictyostelium discoideum (Social amoeba).